Consider the following 574-residue polypeptide: Methionine--tRNA ligase (574 aa).

A 'HIGH' region motif is present at residues 11–21; the sequence is PYINGIKHLGN. Positions 143, 146, 156, and 159 each coordinate Zn(2+). The short motif at 345-349 is the 'KMSKS' region element; it reads KFSTS. T348 contributes to the ATP binding site.

It belongs to the class-I aminoacyl-tRNA synthetase family. MetG type 1 subfamily. As to quaternary structure, monomer. Zn(2+) is required as a cofactor.

The protein resides in the cytoplasm. It catalyses the reaction tRNA(Met) + L-methionine + ATP = L-methionyl-tRNA(Met) + AMP + diphosphate. Its function is as follows. Is required not only for elongation of protein synthesis but also for the initiation of all mRNA translation through initiator tRNA(fMet) aminoacylation. The protein is Methionine--tRNA ligase of Streptomyces avermitilis (strain ATCC 31267 / DSM 46492 / JCM 5070 / NBRC 14893 / NCIMB 12804 / NRRL 8165 / MA-4680).